The sequence spans 195 residues: Putative manganese efflux pump MntP (195 aa).

Helical transmembrane passes span 4–24, 39–59, 64–84, 120–140, 145–165, and 175–195; these read ILIT…SLAM, FVLT…NLGL, FLGV…GWQM, ILLL…TLGT, ILIT…VGFA, and GSYA…KFVV.

Belongs to the MntP (TC 9.B.29) family.

The protein localises to the cell membrane. Functionally, probably functions as a manganese efflux pump. The chain is Putative manganese efflux pump MntP from Syntrophomonas wolfei subsp. wolfei (strain DSM 2245B / Goettingen).